The primary structure comprises 215 residues: 3-demethoxyubiquinol 3-hydroxylase (215 aa).

Fe cation contacts are provided by Glu64, Glu94, His97, Glu146, Glu178, and His181.

The protein belongs to the COQ7 family. Requires Fe cation as cofactor.

The protein localises to the cell membrane. It carries out the reaction a 5-methoxy-2-methyl-3-(all-trans-polyprenyl)benzene-1,4-diol + AH2 + O2 = a 3-demethylubiquinol + A + H2O. The protein operates within cofactor biosynthesis; ubiquinone biosynthesis. Functionally, catalyzes the hydroxylation of 2-nonaprenyl-3-methyl-6-methoxy-1,4-benzoquinol during ubiquinone biosynthesis. The sequence is that of 3-demethoxyubiquinol 3-hydroxylase from Coxiella burnetii (strain RSA 331 / Henzerling II).